The following is a 186-amino-acid chain: Protein GrpE (186 aa).

The span at 1-15 (MADEQQTLDQQTPEQ) shows a compositional bias: polar residues. The segment at 1–20 (MADEQQTLDQQTPEQPTGAA) is disordered.

Belongs to the GrpE family. Homodimer.

Its subcellular location is the cytoplasm. Participates actively in the response to hyperosmotic and heat shock by preventing the aggregation of stress-denatured proteins, in association with DnaK and GrpE. It is the nucleotide exchange factor for DnaK and may function as a thermosensor. Unfolded proteins bind initially to DnaJ; upon interaction with the DnaJ-bound protein, DnaK hydrolyzes its bound ATP, resulting in the formation of a stable complex. GrpE releases ADP from DnaK; ATP binding to DnaK triggers the release of the substrate protein, thus completing the reaction cycle. Several rounds of ATP-dependent interactions between DnaJ, DnaK and GrpE are required for fully efficient folding. In Pseudomonas aeruginosa (strain LESB58), this protein is Protein GrpE.